The primary structure comprises 307 residues: Homoserine kinase (307 aa).

Pro-91–Ala-101 contacts ATP.

Belongs to the GHMP kinase family. Homoserine kinase subfamily.

It is found in the cytoplasm. The catalysed reaction is L-homoserine + ATP = O-phospho-L-homoserine + ADP + H(+). It participates in amino-acid biosynthesis; L-threonine biosynthesis; L-threonine from L-aspartate: step 4/5. Its function is as follows. Catalyzes the ATP-dependent phosphorylation of L-homoserine to L-homoserine phosphate. This is Homoserine kinase from Deinococcus radiodurans (strain ATCC 13939 / DSM 20539 / JCM 16871 / CCUG 27074 / LMG 4051 / NBRC 15346 / NCIMB 9279 / VKM B-1422 / R1).